Consider the following 361-residue polypeptide: Fructose-bisphosphate aldolase (361 aa).

Position 2 is an N-acetylthreonine (threonine 2). Arginine 56 and lysine 147 together coordinate substrate. Glutamate 188 serves as the catalytic Proton acceptor. Lysine 230 functions as the Schiff-base intermediate with dihydroxyacetone-P in the catalytic mechanism.

The protein belongs to the class I fructose-bisphosphate aldolase family. As to quaternary structure, homotetramer. As to expression, mainly expressed in the heads and partly in the thoraxes of adult flies. In terms of tissue distribution, expressed in all adult tissues. The Alpha-beta mRNA shows strong expression in the abdomens of adults. Mainly expressed in adult abdominal regions and is also expressed in lesser amounts in other parts of the body. The Beta-gamma mRNA is expressed in adult heads.

It carries out the reaction beta-D-fructose 1,6-bisphosphate = D-glyceraldehyde 3-phosphate + dihydroxyacetone phosphate. Its pathway is carbohydrate degradation; glycolysis; D-glyceraldehyde 3-phosphate and glycerone phosphate from D-glucose: step 4/4. Its function is as follows. Enzyme of the glycolytic pathway. Glycolysis is essential in glial cells but not in neurons; neurons rely on the citric acid cycle for their energy needs, and on lactate and alanine secreted into the hemolymph by glial cells to fuel it. May take part in developmental stage-specific or tissue -specific sugar-phosphate metabolisms. Protein acts on two substrates fructose 1,6-bisphosphate and fructose 1-phosphate (like other class I aldolases). The sequence is that of Fructose-bisphosphate aldolase from Drosophila melanogaster (Fruit fly).